A 360-amino-acid chain; its full sequence is MSGRRKGCSAATASSSSSSPPSRLPPLPGHARRPRRKRCLVPEVFCTRDLADLCVRRDYEGLRRYLRRFEGSCVSLGWPSQCIYVVGGEHSPHSLTEIDLEHCQNDFFGEFRALHLIGTVSHATCRYQVFVDAYGAVFAYDAQEDCLYELASDLAGFFAKGMIRCDPVHESICARLQPNVPLVHPDHRAELCRRSRASARGRYLRSLLAFRELLACEDTAARCAYVEAHREAQLTLIWPEKHSLVLRTARDLGLSASMLRRFQRSLYTREPVMPLGEIEGAEDKTFFHRVRILCGDTGTVYAALVGQDKLVRLARDLRGFVRVGLALLIDDFRYESIGPVDRSSLYEANPELRLPFKKRR.

The tract at residues 1–33 is disordered; sequence MSGRRKGCSAATASSSSSSPPSRLPPLPGHARR.

It belongs to the herpesviridae US22 family.

This is an uncharacterized protein from Human cytomegalovirus (strain AD169) (HHV-5).